We begin with the raw amino-acid sequence, 373 residues long: Citrate synthase (373 aa).

Residues histidine 262 and aspartate 314 contribute to the active site.

It belongs to the citrate synthase family. In terms of assembly, homohexamer.

It carries out the reaction oxaloacetate + acetyl-CoA + H2O = citrate + CoA + H(+). Its pathway is carbohydrate metabolism; tricarboxylic acid cycle; isocitrate from oxaloacetate: step 1/2. The sequence is that of Citrate synthase (ctsA) from Heyndrickxia coagulans (Weizmannia coagulans).